The sequence spans 256 residues: Ubiquinone biosynthesis O-methyltransferase (256 aa).

The S-adenosyl-L-methionine site is built by R44, G80, D101, and M144.

Belongs to the methyltransferase superfamily. UbiG/COQ3 family.

It carries out the reaction a 3-demethylubiquinol + S-adenosyl-L-methionine = a ubiquinol + S-adenosyl-L-homocysteine + H(+). The enzyme catalyses a 3-(all-trans-polyprenyl)benzene-1,2-diol + S-adenosyl-L-methionine = a 2-methoxy-6-(all-trans-polyprenyl)phenol + S-adenosyl-L-homocysteine + H(+). The protein operates within cofactor biosynthesis; ubiquinone biosynthesis. In terms of biological role, O-methyltransferase that catalyzes the 2 O-methylation steps in the ubiquinone biosynthetic pathway. The polypeptide is Ubiquinone biosynthesis O-methyltransferase (Methylocella silvestris (strain DSM 15510 / CIP 108128 / LMG 27833 / NCIMB 13906 / BL2)).